We begin with the raw amino-acid sequence, 457 residues long: Succinate-semialdehyde dehydrogenase [NADP(+)] 1 (457 aa).

NADP(+) is bound at residue 209–214 (GSEPAG). Residues Glu231 and Cys265 contribute to the active site.

It belongs to the aldehyde dehydrogenase family.

The enzyme catalyses succinate semialdehyde + NAD(+) + H2O = succinate + NADH + 2 H(+). It carries out the reaction succinate semialdehyde + NADP(+) + H2O = succinate + NADPH + 2 H(+). Functionally, catalyzes the NADP(+)-dependent oxidation of succinate semialdehyde to succinate. It is believed to be the main source of succinate semialdehyde dehydrogenase activity in Mycobacterium. This chain is Succinate-semialdehyde dehydrogenase [NADP(+)] 1 (gabD1), found in Mycobacterium bovis (strain ATCC BAA-935 / AF2122/97).